We begin with the raw amino-acid sequence, 93 residues long: Putative sodium channel toxin Ts41 (93 aa).

The signal sequence occupies residues 1–23 (MKIGVLFTIISMLCLLEVRKICS). 4 cysteine pairs are disulfide-bonded: Cys22–Cys87, Cys39–Cys62, Cys48–Cys67, and Cys52–Cys69. The 63-residue stretch at 26-88 (EGGYPRYFSF…FWNVYRKYCK (63 aa)) folds into the LCN-type CS-alpha/beta domain.

The protein belongs to the long (4 C-C) scorpion toxin superfamily. Expressed by the venom gland.

The protein localises to the secreted. The edited BmKBTx-like may modulate voltage-gated sodium channels (Nav). In terms of biological role, the non-edited form is able to form a heterodimer. In orthologs, a heterodimer with LVP beta-chain induces lipolysis in rat adipocytes, which is mediated through the beta-2 adrenergic receptor pathway (ADRB2). Since no LVP beta-chains have been identified in the venom of this scorpion, it is possible that this protein is not involved in a lipolysis process. In Tityus serrulatus (Brazilian scorpion), this protein is Putative sodium channel toxin Ts41.